A 141-amino-acid polypeptide reads, in one-letter code: MKQKIILWIGALLLLTAGTGCEKNKDYEVPTQLTGTRWELAGIVDAKTGKITPLAPKGCYGFKFISETEAKGGTVLNQMTVHLTTPPFIGIVTMIGDEENGDAALFYRIIKTLESYTWEKNELKFFYDNKQYYLLYKYSKP.

Residues methionine 1–glycine 20 form the signal peptide. Cysteine 21 is lipidated: N-palmitoyl cysteine. A lipid anchor (S-diacylglycerol cysteine) is attached at cysteine 21.

Its subcellular location is the cell membrane. This chain is Putative lipoprotein Tanf_09445, found in Tannerella forsythia (strain ATCC 43037 / JCM 10827 / CCUG 21028 A / KCTC 5666 / FDC 338) (Bacteroides forsythus).